The sequence spans 1358 residues: DNA-directed RNA polymerase subunit beta (1358 aa).

It belongs to the RNA polymerase beta chain family. The RNAP catalytic core consists of 2 alpha, 1 beta, 1 beta' and 1 omega subunit. When a sigma factor is associated with the core the holoenzyme is formed, which can initiate transcription.

It catalyses the reaction RNA(n) + a ribonucleoside 5'-triphosphate = RNA(n+1) + diphosphate. In terms of biological role, DNA-dependent RNA polymerase catalyzes the transcription of DNA into RNA using the four ribonucleoside triphosphates as substrates. The sequence is that of DNA-directed RNA polymerase subunit beta from Azotobacter vinelandii (strain DJ / ATCC BAA-1303).